A 45-amino-acid polypeptide reads, in one-letter code: Large ribosomal subunit protein bL34 (45 aa).

It belongs to the bacterial ribosomal protein bL34 family.

The polypeptide is Large ribosomal subunit protein bL34 (Frankia casuarinae (strain DSM 45818 / CECT 9043 / HFP020203 / CcI3)).